A 78-amino-acid polypeptide reads, in one-letter code: Large ribosomal subunit protein bL28 (78 aa).

Residues 1–20 (MSRVCQVTGKRPAVGNNRSH) form a disordered region.

Belongs to the bacterial ribosomal protein bL28 family.

The chain is Large ribosomal subunit protein bL28 from Actinobacillus succinogenes (strain ATCC 55618 / DSM 22257 / CCUG 43843 / 130Z).